A 446-amino-acid chain; its full sequence is MTEQKRKLEKLTGVKGMNDILPQDAGLWEFFEATVKSLLRAYGYQNIRTPIVEHTQLFTRGIGEVTDIVEKEMYSFVDALNGENLTLRPENTAAVVRAAIEHNMLYDGPKRLWYLGPMFRHERPQRGRYRQFHQVGVEALGFAGPDADAEIIMMCQRLWDDLGLTGIKLEINSLGLAEERAAHRVELIKYLEQHVDKLDDDAQRRLYTNPLRVLDTKNPALQEIVRNAPQLIDFLGDVSRAHFDGLQRLLKANNLPFTINPRLVRGLDYYNLTVFEWVTDKLGAQGTVAAGGRYDPLIEQLGGKPTAACGWAMGVERILELLKEEHLVPEQEGVDVYVVHQGDAAREQAFIVAERLRDTGLDVILHCSADGAGASFKSQMKRADASGAAFAVILGEDEVANGTVSVKPLRGTGAEGEKNVQQSVPVESLTEFLINAMVATAEDGDD.

This sequence belongs to the class-II aminoacyl-tRNA synthetase family. As to quaternary structure, homodimer.

The protein resides in the cytoplasm. It catalyses the reaction tRNA(His) + L-histidine + ATP = L-histidyl-tRNA(His) + AMP + diphosphate + H(+). This is Histidine--tRNA ligase from Burkholderia pseudomallei (strain 668).